A 366-amino-acid chain; its full sequence is Growth/differentiation factor 3 (366 aa).

Residues 1-22 form the signal peptide; the sequence is MQPYQRLLALGFLLLTLPWGQT. Positions 23-252 are excised as a propeptide; the sequence is SEFQDSDLLQ…HCHPSSRKRR (230 aa). Residues asparagine 113 and asparagine 308 are each glycosylated (N-linked (GlcNAc...) asparagine). 3 cysteine pairs are disulfide-bonded: cysteine 266/cysteine 331, cysteine 295/cysteine 363, and cysteine 299/cysteine 365.

The protein belongs to the TGF-beta family. Homodimer. Heterodimer (Potential). But, in contrast to other members of this family, cannot be disulfide-linked. In terms of processing, synthesized as large precursor molecule that undergo proteolytic cleavage, releasing the pro-domain from the active, receptor binding, C-terminal region of the molecule. Primarily in adult bone marrow, spleen, thymus and adipose tissue.

It is found in the secreted. It localises to the cytoplasm. Growth factor involved in early embryonic development and adipose-tissue homeostasis. During embryogenesis controls formation of anterior visceral endoderm and mesoderm and the establishment of anterior-posterior identity through a receptor complex comprising the receptor ACVR1B and the coreceptor CRIPTO. Regulates adipose-tissue homeostasis and energy balance under nutrient overload in part by signaling through the receptor complex based on ACVR1C and CRIPTO. The polypeptide is Growth/differentiation factor 3 (Gdf3) (Mus musculus (Mouse)).